The sequence spans 359 residues: Protein Wnt-9b (359 aa).

The first 23 residues, 1 to 23 (MRPAPALALAALCLLVLPAAAAA), serve as a signal peptide directing secretion. 11 disulfide bridges follow: Cys91–Cys102, Cys137–Cys145, Cys147–Cys164, Cys212–Cys226, Cys214–Cys221, Cys293–Cys318, Cys307–Cys313, Cys317–Cys357, Cys333–Cys348, Cys335–Cys345, and Cys340–Cys341. The N-linked (GlcNAc...) asparagine glycan is linked to Asn101. Ser218 carries the O-palmitoleoyl serine; by PORCN lipid modification.

It belongs to the Wnt family. Forms a soluble 1:1 complex with AFM; this prevents oligomerization and is required for prolonged biological activity. The complex with AFM may represent the physiological form in body fluids. Component of the Wnt-Fzd-LRP5-LRP6 signaling complex that contains a WNT protein, a FZD protein and LRP5 or LRP6. Interacts directly in the complex with LRP6. Interacts with PKD1 (via extracellular domain). Post-translationally, palmitoleoylation is required for efficient binding to frizzled receptors. Depalmitoleoylation leads to Wnt signaling pathway inhibition.

Its subcellular location is the secreted. It is found in the extracellular space. It localises to the extracellular matrix. Ligand for members of the frizzled family of seven transmembrane receptors. Functions in the canonical Wnt/beta-catenin signaling pathway. Required for normal embryonic kidney development, and for normal development of the urogenital tract, including uterus and part of the oviduct and the upper vagina in females, and epididymis and vas deferens in males. Activates a signaling cascade in the metanephric mesenchyme that induces tubulogenesis. Acts upstream of WNT4 in the signaling pathways that mediate development of kidney tubules and the Muellerian ducts. Plays a role in cranofacial development and is required for normal fusion of the palate during embryonic development. The sequence is that of Protein Wnt-9b (Wnt9b) from Mus musculus (Mouse).